Consider the following 350-residue polypeptide: tRNA uridine(34) hydroxylase (350 aa).

Positions 146 to 240 (DDPDAVFIDM…YARRARAQGL (95 aa)) constitute a Rhodanese domain. The Cysteine persulfide intermediate role is filled by Cys-200. Over residues 319 to 328 (RRRRAGRENG) the composition is skewed to basic and acidic residues. The segment at 319-350 (RRRRAGRENGNKIFNKSRGRLNSKLSIPDPAE) is disordered.

Belongs to the TrhO family.

It carries out the reaction uridine(34) in tRNA + AH2 + O2 = 5-hydroxyuridine(34) in tRNA + A + H2O. Catalyzes oxygen-dependent 5-hydroxyuridine (ho5U) modification at position 34 in tRNAs. In Salmonella typhimurium (strain LT2 / SGSC1412 / ATCC 700720), this protein is tRNA uridine(34) hydroxylase.